Consider the following 170-residue polypeptide: MDTMVDFKTLPYRKGVGIVVFNREGQVWIGRRLITSSHTYAEVSKLWQFPQGGIDEGEEPLDAARRELYEETGMRSVNLIKEVQDWFCYDFPQELIGHVLNNQYRGQMQKWFAFQFIGETSEIVINSPENSNKAEFDQWKWINLEVLPSIVVSFKRHVYMKVVHEFRNII.

The Nudix hydrolase domain occupies 11–164 (PYRKGVGIVV…KRHVYMKVVH (154 aa)). The Nudix box signature appears at 52–73 (GGIDEGEEPLDAARRELYEETG).

Belongs to the Nudix hydrolase family. RppH subfamily. As to quaternary structure, monomer. Requires Zn(2+) as cofactor. Mg(2+) serves as cofactor. Mn(2+) is required as a cofactor.

In terms of biological role, accelerates the degradation of transcripts by removing pyrophosphate from the 5'-end of triphosphorylated RNA, leading to a more labile monophosphorylated state that can stimulate subsequent ribonuclease cleavage. Catalyzes the hydrolysis of diadenosine tetra-, penta-, or hexa-phosphate with the departure of ATP as leaving group. Preferred substrate is Ap4A. Also acts on diguanosine tetra- and penta-phosphate at a lesser extent. Required with IalB for erythrocytes invasion. This is RNA pyrophosphohydrolase (rppH) from Bartonella bacilliformis (strain ATCC 35685 / KC583 / Herrer 020/F12,63).